Reading from the N-terminus, the 142-residue chain is Large ribosomal subunit protein uL23 (142 aa).

It belongs to the universal ribosomal protein uL23 family. In terms of assembly, component of the large ribosomal subunit. Mature ribosomes consist of a small (40S) and a large (60S) subunit. The 40S subunit contains about 32 different proteins and 1 molecule of RNA (18S). The 60S subunit contains 45 different proteins and 3 molecules of RNA (25S, 5.8S and 5S).

It localises to the cytoplasm. Its function is as follows. Component of the ribosome, a large ribonucleoprotein complex responsible for the synthesis of proteins in the cell. The small ribosomal subunit (SSU) binds messenger RNAs (mRNAs) and translates the encoded message by selecting cognate aminoacyl-transfer RNA (tRNA) molecules. The large subunit (LSU) contains the ribosomal catalytic site termed the peptidyl transferase center (PTC), which catalyzes the formation of peptide bonds, thereby polymerizing the amino acids delivered by tRNAs into a polypeptide chain. The nascent polypeptides leave the ribosome through a tunnel in the LSU and interact with protein factors that function in enzymatic processing, targeting, and the membrane insertion of nascent chains at the exit of the ribosomal tunnel. RPL25 is a major component of the universal docking site for these factors at the polypeptide exit tunnel. The sequence is that of Large ribosomal subunit protein uL23 from Candida albicans (strain SC5314 / ATCC MYA-2876) (Yeast).